Here is a 258-residue protein sequence, read N- to C-terminus: Acyl-[acyl-carrier-protein]--UDP-N-acetylglucosamine O-acyltransferase (258 aa).

The protein belongs to the transferase hexapeptide repeat family. LpxA subfamily. As to quaternary structure, homotrimer.

It is found in the cytoplasm. The catalysed reaction is a (3R)-hydroxyacyl-[ACP] + UDP-N-acetyl-alpha-D-glucosamine = a UDP-3-O-[(3R)-3-hydroxyacyl]-N-acetyl-alpha-D-glucosamine + holo-[ACP]. The protein operates within glycolipid biosynthesis; lipid IV(A) biosynthesis; lipid IV(A) from (3R)-3-hydroxytetradecanoyl-[acyl-carrier-protein] and UDP-N-acetyl-alpha-D-glucosamine: step 1/6. In terms of biological role, involved in the biosynthesis of lipid A, a phosphorylated glycolipid that anchors the lipopolysaccharide to the outer membrane of the cell. The polypeptide is Acyl-[acyl-carrier-protein]--UDP-N-acetylglucosamine O-acyltransferase (Thermodesulfovibrio yellowstonii (strain ATCC 51303 / DSM 11347 / YP87)).